Consider the following 671-residue polypeptide: DNA ligase (671 aa).

NAD(+)-binding positions include 32–36 (DAEYD), 81–82 (SL), and Glu113. The N6-AMP-lysine intermediate role is filled by Lys115. NAD(+) is bound by residues Arg136, Glu173, Lys290, and Lys314. Residues Cys408, Cys411, Cys426, and Cys432 each contribute to the Zn(2+) site. Positions 593-671 (EIDSPFAGKT…EAEMLRLLGS (79 aa)) constitute a BRCT domain.

Belongs to the NAD-dependent DNA ligase family. LigA subfamily. The cofactor is Mg(2+). Mn(2+) is required as a cofactor.

The enzyme catalyses NAD(+) + (deoxyribonucleotide)n-3'-hydroxyl + 5'-phospho-(deoxyribonucleotide)m = (deoxyribonucleotide)n+m + AMP + beta-nicotinamide D-nucleotide.. Functionally, DNA ligase that catalyzes the formation of phosphodiester linkages between 5'-phosphoryl and 3'-hydroxyl groups in double-stranded DNA using NAD as a coenzyme and as the energy source for the reaction. It is essential for DNA replication and repair of damaged DNA. The protein is DNA ligase of Escherichia coli O157:H7.